The following is a 578-amino-acid chain: XK-related protein 6 (578 aa).

7 helical membrane passes run 86–106 (WIVL…WLAV), 114–134 (FLWS…VQIL), 253–273 (WLQC…LASY), 307–327 (VLSL…FVVL), 348–368 (WEEV…WFNV), 377–397 (MVAY…LWYA), and 410–430 (LALC…VLYY).

Belongs to the XK family.

Its subcellular location is the cell membrane. The protein is XK-related protein 6 (xkr6) of Tetraodon nigroviridis (Spotted green pufferfish).